Here is a 196-residue protein sequence, read N- to C-terminus: Ribosome maturation factor RimP (196 aa).

A disordered region spans residues 176–196; sequence ETNFDEVSTELETDTPSEGDQ. Over residues 177 to 196 the composition is skewed to acidic residues; the sequence is TNFDEVSTELETDTPSEGDQ.

It belongs to the RimP family.

The protein resides in the cytoplasm. Functionally, required for maturation of 30S ribosomal subunits. The sequence is that of Ribosome maturation factor RimP from Roseobacter denitrificans (strain ATCC 33942 / OCh 114) (Erythrobacter sp. (strain OCh 114)).